Here is a 290-residue protein sequence, read N- to C-terminus: Shikimate dehydrogenase (NADP(+)) (290 aa).

Shikimate is bound by residues 21–23 and threonine 68; that span reads SLS. The active-site Proton acceptor is lysine 72. Glutamate 84 serves as a coordination point for NADP(+). The shikimate site is built by asparagine 93 and aspartate 108. NADP(+)-binding positions include 132–136 and leucine 230; that span reads GYGGA. A shikimate-binding site is contributed by tyrosine 232. Glycine 253 is an NADP(+) binding site.

Belongs to the shikimate dehydrogenase family. As to quaternary structure, homodimer.

The enzyme catalyses shikimate + NADP(+) = 3-dehydroshikimate + NADPH + H(+). Its pathway is metabolic intermediate biosynthesis; chorismate biosynthesis; chorismate from D-erythrose 4-phosphate and phosphoenolpyruvate: step 4/7. In terms of biological role, involved in the biosynthesis of the chorismate, which leads to the biosynthesis of aromatic amino acids. Catalyzes the reversible NADPH linked reduction of 3-dehydroshikimate (DHSA) to yield shikimate (SA). The sequence is that of Shikimate dehydrogenase (NADP(+)) from Synechocystis sp. (strain ATCC 27184 / PCC 6803 / Kazusa).